The sequence spans 272 residues: L-aspartate dehydrogenase 3 (272 aa).

NAD(+)-binding residues include A126 and N194. H224 is a catalytic residue.

Belongs to the L-aspartate dehydrogenase family.

It catalyses the reaction L-aspartate + NADP(+) + H2O = oxaloacetate + NH4(+) + NADPH + H(+). The enzyme catalyses L-aspartate + NAD(+) + H2O = oxaloacetate + NH4(+) + NADH + H(+). It functions in the pathway cofactor biosynthesis; NAD(+) biosynthesis; iminoaspartate from L-aspartate (dehydrogenase route): step 1/1. In terms of biological role, specifically catalyzes the NAD or NADP-dependent dehydrogenation of L-aspartate to iminoaspartate. The chain is L-aspartate dehydrogenase 3 from Bordetella bronchiseptica (strain ATCC BAA-588 / NCTC 13252 / RB50) (Alcaligenes bronchisepticus).